Reading from the N-terminus, the 573-residue chain is Proline--tRNA ligase (573 aa).

This sequence belongs to the class-II aminoacyl-tRNA synthetase family. ProS type 1 subfamily. Homodimer.

Its subcellular location is the cytoplasm. It catalyses the reaction tRNA(Pro) + L-proline + ATP = L-prolyl-tRNA(Pro) + AMP + diphosphate. In terms of biological role, catalyzes the attachment of proline to tRNA(Pro) in a two-step reaction: proline is first activated by ATP to form Pro-AMP and then transferred to the acceptor end of tRNA(Pro). As ProRS can inadvertently accommodate and process non-cognate amino acids such as alanine and cysteine, to avoid such errors it has two additional distinct editing activities against alanine. One activity is designated as 'pretransfer' editing and involves the tRNA(Pro)-independent hydrolysis of activated Ala-AMP. The other activity is designated 'posttransfer' editing and involves deacylation of mischarged Ala-tRNA(Pro). The misacylated Cys-tRNA(Pro) is not edited by ProRS. This chain is Proline--tRNA ligase, found in Elusimicrobium minutum (strain Pei191).